We begin with the raw amino-acid sequence, 201 residues long: Regulator of G-protein signaling rgs-1 (201 aa).

The RGS domain occupies 37–156 (SWQQSFDTLM…FLTSIFYRET (120 aa)). The interval 168–201 (GGDEEKEREQRAERARLNVPATAAEGSSKDISMV) is disordered. Residues 170-183 (DEEKEREQRAERAR) show a composition bias toward basic and acidic residues.

As to expression, expressed in most or all neurons.

Functionally, inhibits G protein signaling in nervous system, interacting preferentially with the G(O) subfamily member goa-1. In vitro, protein acts as a GTPase activator of goa-1. Rgs-1 and rgs-2 redundantly adjust signaling when worms are fed to allow rapid induction of egg-laying behavior. This Caenorhabditis elegans protein is Regulator of G-protein signaling rgs-1 (rgs-1).